The following is a 354-amino-acid chain: MEEESISGLEVRFYQTQCLSEDNVIKFENNGYPMIDLILFSDAYQIQRNTSIPIETVTLIQRNLQRLFSSVPINGYQHYLDVKEFKTHYSSGIKLLDQLLGGNGFTSGEIYELVGNTSCGKTQISMCCSLNLSQQYNSNIIYIDSSNSFSPPRLIEIFKSNYLIKQRQKQQQKQQQKQHQKQQENNDKIEQDKILKILDRIKVFNCFDSITLLELLSTIDSTLSIISDEIPTFENQFYKGLKMVVIDSIGTLLAPIIGGKQTQGHYTMMMISRLIKYIADTYQIIFLITNNTVGGNSFDNKAALGEAWSMVPNHQLMINHQYNDDENEERSIYIEKSTRLPVSIIFIINLYWLF.

Residue 115 to 122 (GNTSCGKT) participates in ATP binding.

The protein belongs to the RecA family. RAD51 subfamily.

It localises to the nucleus. Functionally, involved in the homologous recombination repair (HRR) pathway of double-stranded DNA breaks arising during DNA replication or induced by DNA-damaging agents. In Dictyostelium discoideum (Social amoeba), this protein is Probable DNA repair protein RAD51 homolog 4 (rad51d).